The sequence spans 400 residues: Argininosuccinate synthase (400 aa).

Residues 10–18 (AYSGGVDTS) and Ala-38 contribute to the ATP site. Tyr-89 contacts L-citrulline. Gly-119 contacts ATP. L-aspartate contacts are provided by Thr-121, Asn-125, and Asp-126. Asn-125 contributes to the L-citrulline binding site. L-citrulline is bound by residues Arg-129, Ser-177, Ser-186, Glu-262, and Tyr-274.

It belongs to the argininosuccinate synthase family. Type 1 subfamily. Homotetramer.

It is found in the cytoplasm. It carries out the reaction L-citrulline + L-aspartate + ATP = 2-(N(omega)-L-arginino)succinate + AMP + diphosphate + H(+). It participates in amino-acid biosynthesis; L-arginine biosynthesis; L-arginine from L-ornithine and carbamoyl phosphate: step 2/3. This chain is Argininosuccinate synthase, found in Synechococcus elongatus (strain ATCC 33912 / PCC 7942 / FACHB-805) (Anacystis nidulans R2).